The primary structure comprises 376 residues: cAMP-dependent protein kinase type I regulatory subunit (376 aa).

The interval 1–131 (MSYMMAKTLE…ALSKAIAKNV (131 aa)) is dimerization and phosphorylation. Residues 72-93 (PDDCEDLSPMPQTAAPPVRRRG) form a disordered region. A Pseudophosphorylation motif motif is present at residues 91-95 (RRGGI). Ser96 is modified (phosphoserine). 3',5'-cyclic AMP-binding positions include 132–247 (LFAH…FLSR), Glu197, Arg206, 250–371 (ILES…YNSF), Glu321, and Arg330.

Belongs to the cAMP-dependent kinase regulatory chain family. Tetramer, composed of 2 regulatory (R) and 2 catalytic (C) subunits. In the presence of cAMP it dissociates into 2 active monomeric C subunits and an R dimer. Post-translationally, the pseudophosphorylation site binds to the substrate-binding region of the catalytic chain but is not phosphorylated. The physiological significance of phosphorylations by other kinases is unclear.

The polypeptide is cAMP-dependent protein kinase type I regulatory subunit (Pka-R1) (Drosophila melanogaster (Fruit fly)).